The sequence spans 374 residues: Regulator of G-protein signaling 20 (374 aa).

Positions 1–11 (MPRLSQDNQQG) are enriched in polar residues. Disordered stretches follow at residues 1 to 21 (MPRL…RPSR) and 135 to 158 (PPGG…PPMG). Basic residues predominate over residues 12–21 (HQKHFSRPSR). Positions 248–364 (SFDKLMLTPA…MNSALYKDLL (117 aa)) constitute an RGS domain.

In terms of assembly, forms a complex with G(alpha)z/i2 subunits and mu-opioid receptors; the formation of this complex results in mu-opioid receptor desensitization. Interacts with OPRM1. Post-translationally, fatty acylated. Heavily palmitoylated in the cysteine string motif. N- and O-glycosylated in synapsomal membranes. In terms of processing, serine phosphorylated in synapsomal membranes. Post-translationally, sumoylated with SUMO1 and SUMO2 in synaptosomes. The sumoylated forms act as a scaffold for sequestering mu-opioid receptor-activated G(alpha) subunits. In terms of tissue distribution, retinal-specific. Expressed throughout the retina, including photoreceptors.

Its subcellular location is the membrane. It localises to the nucleus. It is found in the cytoplasm. Inhibits signal transduction by increasing the GTPase activity of G protein alpha subunits thereby driving them into their inactive GDP-bound form. Binds selectively to G(z)-alpha and G(alpha)-i2 subunits, accelerates their GTPase activity and regulates their signaling activities. The G(z)-alpha activity is inhibited by the phosphorylation and palmitoylation of the G-protein. Negatively regulates mu-opioid receptor-mediated activation of the G-proteins. The chain is Regulator of G-protein signaling 20 (RGS20) from Bos taurus (Bovine).